The chain runs to 358 residues: Porphobilinogen deaminase, chloroplastic (358 aa).

An N-terminal signal peptide occupies residues 1 to 24 (MPPPPRCAATTAHHSLLGSPTCLA). An S-(dipyrrolylmethanemethyl)cysteine modification is found at Cys-290.

The protein belongs to the HMBS family. Requires dipyrromethane as cofactor.

The protein resides in the plastid. It localises to the chloroplast. The enzyme catalyses 4 porphobilinogen + H2O = hydroxymethylbilane + 4 NH4(+). The protein operates within porphyrin-containing compound metabolism; protoporphyrin-IX biosynthesis; coproporphyrinogen-III from 5-aminolevulinate: step 2/4. Its pathway is porphyrin-containing compound metabolism; chlorophyll biosynthesis. Tetrapolymerization of the monopyrrole PBG into the hydroxymethylbilane pre-uroporphyrinogen in several discrete steps. The sequence is that of Porphobilinogen deaminase, chloroplastic (HEMC) from Oryza sativa subsp. japonica (Rice).